Consider the following 312-residue polypeptide: Methionyl-tRNA formyltransferase (312 aa).

109–112 lines the (6S)-5,6,7,8-tetrahydrofolate pocket; that stretch reads SLLP.

The protein belongs to the Fmt family.

It catalyses the reaction L-methionyl-tRNA(fMet) + (6R)-10-formyltetrahydrofolate = N-formyl-L-methionyl-tRNA(fMet) + (6S)-5,6,7,8-tetrahydrofolate + H(+). Functionally, attaches a formyl group to the free amino group of methionyl-tRNA(fMet). The formyl group appears to play a dual role in the initiator identity of N-formylmethionyl-tRNA by promoting its recognition by IF2 and preventing the misappropriation of this tRNA by the elongation apparatus. The polypeptide is Methionyl-tRNA formyltransferase (Caulobacter sp. (strain K31)).